Reading from the N-terminus, the 338-residue chain is Elongation factor Ts, mitochondrial (338 aa).

A mitochondrion-targeting transit peptide spans 1 to 42 (MSPSIAMFTLTPNARALASKTSKMDLIKNLRERTGAPIVDVK).

The protein belongs to the EF-Ts family.

The protein resides in the mitochondrion. In terms of biological role, associates with the EF-Tu.GDP complex and induces the exchange of GDP to GTP. It remains bound to the aminoacyl-tRNA.EF-Tu.GTP complex up to the GTP hydrolysis stage on the ribosome. The protein is Elongation factor Ts, mitochondrial of Ostreococcus tauri.